The primary structure comprises 584 residues: Levansucrase (584 aa).

A signal peptide spans 1–30; the sequence is MAHVRRKVATLNMALAGSLLMVLGAQSALA. Residue Q31 is modified to Pyrrolidone carboxylic acid. W134, D135, S225, R308, and D309 together coordinate sucrose. The active-site Nucleophile is D135. Residues C339 and C395 are joined by a disulfide bond. Catalysis depends on E401, which acts as the Proton donor/acceptor.

The protein belongs to the glycosyl hydrolase 68 family. Monomer. Post-translationally, the N-terminus is blocked. The N-terminal Gln is cyclized to a pyroglutamic acid.

Its subcellular location is the secreted. It carries out the reaction [6)-beta-D-fructofuranosyl-(2-&gt;](n) alpha-D-glucopyranoside + sucrose = [6)-beta-D-fructofuranosyl-(2-&gt;](n+1) alpha-D-glucopyranoside + D-glucose. Strongly inhibited by Hg(2+) and slightly activated by Co(2+). Not inhibited by the metal ion chelator EDTA, suggesting that this enzyme does not need a metal cofactor. Functionally, catalyzes the synthesis of levan, a fructose polymer, by transferring the fructosyl moiety from sucrose to a growing acceptor molecule. Also displays sucrose hydrolase activity. In vitro, catalyzes transfructosylation from sucrose to a variety of acceptors including water (sucrose hydrolysis), glucose (exchange reaction), fructan (polymerase reaction) and sucrose (oligofructoside synthesis). Levansucrase of G.diazotrophicus SRT4, unlike the enzyme of B.subtilis, causes accumulation of large quantities of tri- and tetrasaccharides but small quantities of high-molecular-mass levan. It may act more as a sucrose hydrolase than as a fructan polymerase, and may be the key enzyme in the sucrose metabolism of G.diazotrophicus SRT4. In Gluconacetobacter diazotrophicus (Acetobacter diazotrophicus), this protein is Levansucrase.